The primary structure comprises 77 residues: Secapin-2 (77 aa).

The first 32 residues, 1 to 32 (MKNYSKNATYLITVLLFSFVTMLLIIPSKCEA), serve as a signal peptide directing secretion. The propeptide occupies 33–52 (VSNDMQPLEARTADLVQQPR). Cysteine 61 and cysteine 72 are oxidised to a cystine. Position 77 is a proline amide (proline 77).

It belongs to the secapin family. Expressed by the venom gland.

Its subcellular location is the secreted. Its function is as follows. Serine protease inhibitor which exhibits antifibrinolytic, antielastolytic and antimicrobial activities. Displays antimicrobial activity against bacteria and fungi. Likely functions in the innate immune response to microbial infection and possibly in the venom, as an antifibrinolytic agent. Induces hyperalgesia and edema mediated by leukotrienes when injected into mice. Does not induce hemolytic activity, mast cell degranulation, or chemotactic activity for polymorphonucleated leukocytes (PMNL). In Apis mellifera (Honeybee), this protein is Secapin-2.